We begin with the raw amino-acid sequence, 280 residues long: Suppressor of disruption of TFIIS (280 aa).

This sequence belongs to the SSM1 family.

Its function is as follows. Could be an enzyme that inactivates 6-azauracil by modifying it. The protein is Suppressor of disruption of TFIIS (SDT1) of Saccharomyces cerevisiae (strain ATCC 204508 / S288c) (Baker's yeast).